Reading from the N-terminus, the 230-residue chain is Acyl-coenzyme A thioesterase THEM4 (230 aa).

The N-terminal 27 residues, 1–27 (MLRNCAMRLRTLGATPARRPGAARRLF), are a transit peptide targeting the mitochondrion. 2 positions are modified to phosphoserine: Ser-28 and Ser-29. N6-succinyllysine occurs at positions 46 and 57. Lys-65 carries the N6-acetyllysine modification. Lys-89 and Lys-98 each carry N6-succinyllysine. The Proton donor/acceptor role is filled by Asp-152. Substrate contacts are provided by residues Lys-175 and 196 to 197 (RK). Lys-197 is modified (N6-succinyllysine).

It belongs to the THEM4/THEM5 thioesterase family. As to quaternary structure, homodimer and homotetramer. Interacts with AKT1 in the cytosol. In terms of assembly, (Microbial infection) Interacts with V-AKT from AKT8 murine leukemia virus. Phosphorylated.

The protein localises to the cell membrane. The protein resides in the cell projection. It localises to the ruffle membrane. Its subcellular location is the cytoplasm. It is found in the mitochondrion. The protein localises to the mitochondrion inner membrane. The protein resides in the mitochondrion intermembrane space. It catalyses the reaction hexadecanoyl-CoA + H2O = hexadecanoate + CoA + H(+). The enzyme catalyses octanoyl-CoA + H2O = octanoate + CoA + H(+). It carries out the reaction decanoyl-CoA + H2O = decanoate + CoA + H(+). The catalysed reaction is dodecanoyl-CoA + H2O = dodecanoate + CoA + H(+). It catalyses the reaction tetradecanoyl-CoA + H2O = tetradecanoate + CoA + H(+). The enzyme catalyses (9Z)-octadecenoyl-CoA + H2O = (9Z)-octadecenoate + CoA + H(+). It carries out the reaction (5Z,8Z,11Z,14Z)-eicosatetraenoyl-CoA + H2O = (5Z,8Z,11Z,14Z)-eicosatetraenoate + CoA + H(+). In terms of biological role, has acyl-CoA thioesterase activity towards medium and long-chain (C14 to C18) fatty acyl-CoA substrates, and probably plays a role in mitochondrial fatty acid metabolism. Plays a role in the apoptotic process, possibly via its regulation of AKT1 activity. This is Acyl-coenzyme A thioesterase THEM4 (Them4) from Mus musculus (Mouse).